The sequence spans 200 residues: Recombination protein RecR (200 aa).

The segment at 59-74 adopts a C4-type zinc-finger fold; it reads CSVCGSLDTSDPCAIC. Positions 82-177 constitute a Toprim domain; it reads RLLCVVEEVG…SVTMLARGVP (96 aa).

Belongs to the RecR family.

Its function is as follows. May play a role in DNA repair. It seems to be involved in an RecBC-independent recombinational process of DNA repair. It may act with RecF and RecO. In Caulobacter sp. (strain K31), this protein is Recombination protein RecR.